The following is a 404-amino-acid chain: Cysteine desulfurase IscS (404 aa).

Pyridoxal 5'-phosphate contacts are provided by residues 75-76, N155, Q183, and 203-205; these read AT and SGH. K206 bears the N6-(pyridoxal phosphate)lysine mark. T243 contributes to the pyridoxal 5'-phosphate binding site. The active-site Cysteine persulfide intermediate is the C328. C328 contacts [2Fe-2S] cluster.

The protein belongs to the class-V pyridoxal-phosphate-dependent aminotransferase family. NifS/IscS subfamily. As to quaternary structure, homodimer. Forms a heterotetramer with IscU, interacts with other sulfur acceptors. Pyridoxal 5'-phosphate is required as a cofactor.

Its subcellular location is the cytoplasm. The enzyme catalyses (sulfur carrier)-H + L-cysteine = (sulfur carrier)-SH + L-alanine. It participates in cofactor biosynthesis; iron-sulfur cluster biosynthesis. Its function is as follows. Master enzyme that delivers sulfur to a number of partners involved in Fe-S cluster assembly, tRNA modification or cofactor biosynthesis. Catalyzes the removal of elemental sulfur atoms from cysteine to produce alanine. Functions as a sulfur delivery protein for Fe-S cluster synthesis onto IscU, an Fe-S scaffold assembly protein, as well as other S acceptor proteins. This Pectobacterium carotovorum subsp. carotovorum (strain PC1) protein is Cysteine desulfurase IscS.